We begin with the raw amino-acid sequence, 345 residues long: MITEAIQKVVAGINLSEAEAMETMQEVMEGKATQAQIASLLTALHLKGETVPEITGFARTMRTKVIRVQTKRRNLVDTCGTGGDGANTFNISTACAFVLAGAGLPVAKHGNRSVSSKCGSADVLEQLGVFVQLTPEEAGLCLDQVGIAFLFAPLLHGAMKYAAAPRKEIGIRTVFNILGPLTNPAFAENQVLGVYSSDLAPVLAQVLANLGTKRSFVIHGCGGLDEISLAGEALVYEVKDNQVKEMIIDPMDYGLDRAPISALAGGDAKRNARMIKNILSGAPGPQRDTIIINAALGLIAGGLVRDLAMGIRLAEQIIDEGYALKKLNLLVEFSQTLVGRRSAAL.

Residues glycine 80, 83 to 84 (GD), threonine 88, 90 to 93 (NIST), 108 to 116 (KHGNRSVSS), and serine 120 each bind 5-phospho-alpha-D-ribose 1-diphosphate. Glycine 80 serves as a coordination point for anthranilate. Residue serine 92 coordinates Mg(2+). Asparagine 111 serves as a coordination point for anthranilate. Arginine 166 contacts anthranilate. Residues aspartate 225 and glutamate 226 each coordinate Mg(2+).

Belongs to the anthranilate phosphoribosyltransferase family. As to quaternary structure, homodimer. It depends on Mg(2+) as a cofactor.

The enzyme catalyses N-(5-phospho-beta-D-ribosyl)anthranilate + diphosphate = 5-phospho-alpha-D-ribose 1-diphosphate + anthranilate. It participates in amino-acid biosynthesis; L-tryptophan biosynthesis; L-tryptophan from chorismate: step 2/5. In terms of biological role, catalyzes the transfer of the phosphoribosyl group of 5-phosphorylribose-1-pyrophosphate (PRPP) to anthranilate to yield N-(5'-phosphoribosyl)-anthranilate (PRA). This chain is Anthranilate phosphoribosyltransferase, found in Desulforamulus reducens (strain ATCC BAA-1160 / DSM 100696 / MI-1) (Desulfotomaculum reducens).